Consider the following 373-residue polypeptide: Lipoyl amidotransferase LIPT1, mitochondrial (373 aa).

A mitochondrion-targeting transit peptide spans 1-25 (MLIPLSMKNCFRLLCQHKVPAAGFK). Residues 57 to 243 (LEGKPILFLW…EYAAHHQVDG (187 aa)) form the BPL/LPL catalytic domain. Y107, K151, K161, and T179 together coordinate (R)-lipoyl-5'-AMP.

Belongs to the LplA family.

The protein resides in the mitochondrion. The enzyme catalyses (R)-lipoyl-5'-AMP + L-lysyl-[lipoyl-carrier protein] = N(6)-[(R)-lipoyl]-L-lysyl-[lipoyl-carrier protein] + AMP + 2 H(+). The catalysed reaction is N(6)-[(R)-lipoyl]-L-lysyl-[glycine-cleavage complex H protein] + L-lysyl-[lipoyl-carrier protein] = L-lysyl-[glycine-cleavage complex H protein] + N(6)-[(R)-lipoyl]-L-lysyl-[lipoyl-carrier protein]. It functions in the pathway protein modification; protein lipoylation via exogenous pathway; protein N(6)-(lipoyl)lysine from lipoate: step 2/2. Functionally, lipoyl amidotransferase that catalyzes the transfer of lipoyl moieties from lipoyl-protein H of the glycine cleavage system (lipoyl-GCSH) to E2 subunits of the pyruvate dehydrogenase complex (PDCE2). Unable to catalyze the transfer of octanoyl from octanoyl-GCSH to PDCE2. In vitro, it is also able to catalyze the transfer of the lipoyl group from lipoyl-AMP to the specific lysine residue of lipoyl domains of lipoate-dependent enzymes but this reaction may not be physiologically relevant. This chain is Lipoyl amidotransferase LIPT1, mitochondrial, found in Mus musculus (Mouse).